Consider the following 962-residue polypeptide: Villin-5 (962 aa).

Gelsolin-like repeat units follow at residues 29–79 (FKPV…DEAG), 150–190 (VRVK…QERA), 262–305 (GQTD…DQRK), 396–453 (LQVW…EDRA), 534–574 (MQAI…EDQE), and 636–677 (LKAT…KKKP). The segment at 749-785 (KPKRRVPAYSSRSTVPDKSQPRSRSMTFSPDRARVRG) is disordered. Residues 758 to 776 (SSRSTVPDKSQPRSRSMTF) are compositionally biased toward polar residues. Phosphoserine occurs at positions 777 and 787. Positions 845–862 (EKPTPTSQEPPTSPSSSE) are enriched in low complexity. Residues 845 to 917 (EKPTPTSQEP…LKTDSEDPVS (73 aa)) are disordered. The segment covering 863–875 (ATNQAEAPKSTSE) has biased composition (polar residues). A Phosphoserine modification is found at S883. Over residues 889 to 898 (SKEEEAEEES) the composition is skewed to acidic residues. Residues 897–962 (ESSLPTFPYE…NKLKMSVNLF (66 aa)) enclose the HP domain.

It belongs to the villin/gelsolin family. Ubiquitous, but expressed preferentially in pollen and stamens.

It localises to the cytoplasm. It is found in the cytoskeleton. Major actin filament stabilizing factor and regulator of actin dynamics. Binds actin and actin filament bundles in a Ca(2+)-insensitive manner, but caps the barbed end of actin filaments and is able to sever them in a calcium-dependent manner. Required for the construction of actin collars in pollen tubes. Acts synergistically with VLN2 (AC O81644) to regulate polarized pollen tube growth. The protein is Villin-5 of Arabidopsis thaliana (Mouse-ear cress).